Reading from the N-terminus, the 118-residue chain is Large ribosomal subunit protein bL17 (118 aa).

It belongs to the bacterial ribosomal protein bL17 family. As to quaternary structure, part of the 50S ribosomal subunit. Contacts protein L32.

In Campylobacter concisus (strain 13826), this protein is Large ribosomal subunit protein bL17.